Reading from the N-terminus, the 681-residue chain is MDGKYVLCNWKDQLWPAKVLDRSESPSESKRKNTSSLEVEILSLDEKITVESTDTKVLSKSAVEAIMSSLAVQSEVIIAPREETAYERSLKMALEMVKEGTNLSQESMSEEQPTATASENVPEQPPDSPPHKKFRKLESNTQEDSASILLCSESDDSMTDDKLQVHTTGESMPSEMDTKATENLGCCQTDPSLADEDDKKEEKKKIDISAIMSVNLSLKEESEYIKEEKFVPSSEDLTVPKEESQDILPEAPLAVSSECSIVSENNMEDPGEGPSNQNLVSYANQNQSSVESDVGAETSTAGCSGDFQVSLPTRDTVSSDLLLQRLDLEDLEEEARASGKLLSLNPASAAALENDNEDDDEDLPRFILHYETRAFETGMIVWFKYQKYPFWPAVIKSIRRKERKASVLLVEADMSPQKKGVRVSLRRLKKYDCKEKQALVEKAREEYRESIDWCVSLICDYRVRLGCGSFTGSFFEYYAADISYPVRKIIKQDTFRNIFPKLYNENVGEQLPMASQAKRVSFQKILPDRMKPARDRANKNLVDFIVNAKGTEDHLLGILKGTKKSKWLKSFLNAKSFTPCIETYFEDEDQLDEVVKYLQEIYKQIDQKMLTLIKDDKIKFVLEVLLPEAIICSISAVDGLDYEAAEAKYLKGPSLGCRERELYDSKILFEKRRRSLPNEGH.

Residues 102–121 show a composition bias toward polar residues; that stretch reads NLSQESMSEEQPTATASENV. Disordered stretches follow at residues 102–144, 166–200, and 285–304; these read NLSQ…TQED, HTTG…DDKK, and QNQS…AGCS. Position 128 is a phosphoserine (S128). Residues 285–302 are compositionally biased toward polar residues; sequence QNQSSVESDVGAETSTAG. In terms of domain architecture, PWWP spans 377 to 438; sequence TGMIVWFKYQ…KKYDCKEKQA (62 aa).

Belongs to the PWWP3A family.

This chain is PWWP domain-containing DNA repair factor 3B (Pwwp3b), found in Mus musculus (Mouse).